Reading from the N-terminus, the 187-residue chain is Putative manganese efflux pump MntP (187 aa).

6 helical membrane-spanning segments follow: residues Tyr3–Gly23, Ile39–Ser59, Ile65–Ile85, Leu106–Phe126, Val129–Gly149, and Leu166–Phe186.

The protein belongs to the MntP (TC 9.B.29) family.

It is found in the cell inner membrane. Functionally, probably functions as a manganese efflux pump. The protein is Putative manganese efflux pump MntP of Actinobacillus succinogenes (strain ATCC 55618 / DSM 22257 / CCUG 43843 / 130Z).